The chain runs to 208 residues: Redox-sensing transcriptional repressor Rex 1 (208 aa).

The segment at residues 15–54 (SYYMCLERLLDEGVEVVSSEELARRLDLKASQIRKDLSYF) is a DNA-binding region (H-T-H motif). Residue 89–94 (GAGNIG) participates in NAD(+) binding.

The protein belongs to the transcriptional regulatory Rex family. Homodimer.

The protein resides in the cytoplasm. In terms of biological role, modulates transcription in response to changes in cellular NADH/NAD(+) redox state. The sequence is that of Redox-sensing transcriptional repressor Rex 1 from Thermotoga maritima (strain ATCC 43589 / DSM 3109 / JCM 10099 / NBRC 100826 / MSB8).